The following is a 255-amino-acid chain: 5'-nucleotidase SurE (255 aa).

4 residues coordinate a divalent metal cation: D11, D12, S43, and N99.

It belongs to the SurE nucleotidase family. Requires a divalent metal cation as cofactor.

The protein localises to the cytoplasm. It carries out the reaction a ribonucleoside 5'-phosphate + H2O = a ribonucleoside + phosphate. Its function is as follows. Nucleotidase that shows phosphatase activity on nucleoside 5'-monophosphates. This chain is 5'-nucleotidase SurE, found in Caldanaerobacter subterraneus subsp. tengcongensis (strain DSM 15242 / JCM 11007 / NBRC 100824 / MB4) (Thermoanaerobacter tengcongensis).